Reading from the N-terminus, the 375-residue chain is ATP phosphoribosyltransferase regulatory subunit (375 aa).

Belongs to the class-II aminoacyl-tRNA synthetase family. HisZ subfamily. As to quaternary structure, heteromultimer composed of HisG and HisZ subunits.

It is found in the cytoplasm. The protein operates within amino-acid biosynthesis; L-histidine biosynthesis; L-histidine from 5-phospho-alpha-D-ribose 1-diphosphate: step 1/9. In terms of biological role, required for the first step of histidine biosynthesis. May allow the feedback regulation of ATP phosphoribosyltransferase activity by histidine. This is ATP phosphoribosyltransferase regulatory subunit from Agrobacterium fabrum (strain C58 / ATCC 33970) (Agrobacterium tumefaciens (strain C58)).